We begin with the raw amino-acid sequence, 157 residues long: Probable calcium-binding protein CML23 (157 aa).

EF-hand domains lie at 11 to 46 (GSMEDIKKVFQRFDKNNDGKISIDELKDVIGALSPN), 47 to 82 (ASQEETKAMMKEFDLDGNGFIDLDEFVALFQISDQS), 86 to 121 (SAIRDLKEAFDLYDLDRNGRISANELHSVMKNLGEK), and 122 to 157 (CSIQDCQRMINKVDSDGDGCVDFEEFKKMMMINGSA). 19 residues coordinate Ca(2+): Asp-24, Asn-26, Asp-28, Lys-30, Glu-35, Asp-60, Asp-62, Asn-64, Glu-71, Asp-99, Asp-101, Asn-103, Arg-105, Glu-110, Asp-135, Asp-137, Asp-139, Cys-141, and Glu-146.

In terms of biological role, potential calcium sensor. The protein is Probable calcium-binding protein CML23 (CML23) of Arabidopsis thaliana (Mouse-ear cress).